Consider the following 215-residue polypeptide: Large ribosomal subunit protein uL4 (215 aa).

The segment at 43–97 (RRQGTHSTKTRAEVSGGGKKPWRQKGTGRARAGSTRSPIWVGGGKTHTPKPRDYS) is disordered.

This sequence belongs to the universal ribosomal protein uL4 family. As to quaternary structure, part of the 50S ribosomal subunit.

In terms of biological role, one of the primary rRNA binding proteins, this protein initially binds near the 5'-end of the 23S rRNA. It is important during the early stages of 50S assembly. It makes multiple contacts with different domains of the 23S rRNA in the assembled 50S subunit and ribosome. Its function is as follows. Forms part of the polypeptide exit tunnel. This Brachyspira hyodysenteriae (strain ATCC 49526 / WA1) protein is Large ribosomal subunit protein uL4.